Here is a 190-residue protein sequence, read N- to C-terminus: dCTP deaminase (190 aa).

113–118 contacts dCTP; the sequence is KSTYAR. E139 (proton donor/acceptor) is an active-site residue. Residues Q158, Y172, K181, and Q182 each coordinate dCTP.

Belongs to the dCTP deaminase family. As to quaternary structure, homotrimer.

The catalysed reaction is dCTP + H2O + H(+) = dUTP + NH4(+). The protein operates within pyrimidine metabolism; dUMP biosynthesis; dUMP from dCTP (dUTP route): step 1/2. In terms of biological role, catalyzes the deamination of dCTP to dUTP. The polypeptide is dCTP deaminase (Chlamydia muridarum (strain MoPn / Nigg)).